Consider the following 215-residue polypeptide: Urease accessory protein UreG (215 aa).

Position 11-18 (11-18 (GPVGAGKS)) interacts with GTP.

The protein belongs to the SIMIBI class G3E GTPase family. UreG subfamily. In terms of assembly, homodimer. UreD, UreF and UreG form a complex that acts as a GTP-hydrolysis-dependent molecular chaperone, activating the urease apoprotein by helping to assemble the nickel containing metallocenter of UreC. The UreE protein probably delivers the nickel.

The protein resides in the cytoplasm. In terms of biological role, facilitates the functional incorporation of the urease nickel metallocenter. This process requires GTP hydrolysis, probably effectuated by UreG. The protein is Urease accessory protein UreG of Cenarchaeum symbiosum (strain A).